The primary structure comprises 666 residues: Calpain-10 (666 aa).

The Calpain catalytic domain occupies 13–321; it reads LFRDAAFPAS…FDEVTIGYPV (309 aa). Active-site residues include C73, H238, and N263. 2 domain III regions span residues 322–488 and 507–648; these read TEAG…ISLS and EWET…IHSQ.

It belongs to the peptidase C2 family. As to expression, ubiquitous.

It localises to the cytoplasm. The protein localises to the nucleus. Its function is as follows. Calcium-regulated non-lysosomal thiol-protease which catalyzes limited proteolysis of substrates involved in cytoskeletal remodeling and signal transduction. May play a role in insulin-stimulated glucose uptake. The polypeptide is Calpain-10 (Capn10) (Rattus norvegicus (Rat)).